Here is a 397-residue protein sequence, read N- to C-terminus: Acetate kinase (397 aa).

Asn8 is a Mg(2+) binding site. ATP is bound at residue Lys15. Residue Arg89 coordinates substrate. The active-site Proton donor/acceptor is the Asp146. ATP-binding positions include 206 to 210, 283 to 285, and 331 to 335; these read HVGNG, DMR, and GMGEN. Residue Glu383 coordinates Mg(2+).

It belongs to the acetokinase family. In terms of assembly, homodimer. Mg(2+) serves as cofactor. It depends on Mn(2+) as a cofactor.

The protein localises to the cytoplasm. The catalysed reaction is acetate + ATP = acetyl phosphate + ADP. Its pathway is metabolic intermediate biosynthesis; acetyl-CoA biosynthesis; acetyl-CoA from acetate: step 1/2. Catalyzes the formation of acetyl phosphate from acetate and ATP. Can also catalyze the reverse reaction. In Streptococcus agalactiae serotype III (strain NEM316), this protein is Acetate kinase.